A 260-amino-acid polypeptide reads, in one-letter code: NH(3)-dependent NAD(+) synthetase (260 aa).

Position 31–38 (31–38 (GLSGGLDS)) interacts with ATP. Residue aspartate 37 participates in Mg(2+) binding. Arginine 112 contacts deamido-NAD(+). Residue threonine 132 participates in ATP binding. Glutamate 137 serves as a coordination point for Mg(2+). ATP contacts are provided by lysine 161 and serine 183.

Belongs to the NAD synthetase family. As to quaternary structure, homodimer.

It catalyses the reaction deamido-NAD(+) + NH4(+) + ATP = AMP + diphosphate + NAD(+) + H(+). The protein operates within cofactor biosynthesis; NAD(+) biosynthesis; NAD(+) from deamido-NAD(+) (ammonia route): step 1/1. In terms of biological role, catalyzes the ATP-dependent amidation of deamido-NAD to form NAD. Uses ammonia as a nitrogen source. This Helicobacter pylori (strain J99 / ATCC 700824) (Campylobacter pylori J99) protein is NH(3)-dependent NAD(+) synthetase.